The sequence spans 308 residues: MELRSIKTFHTIVKFGSFYKAAEILNYSQPTISMRMKQLEQDLGVLLFERGKSLQLTKAGKLFYERTGDLLMQYEALKHNLSDLKEEEAGIINIGVSEPTASLIFPEILKDFLMDYPKITVNIKVDDANTCSQKLLDGTIDFAVCGEPELILENYYHPFFYDTLNVIVSDQHPLAEKKAVHLSDLAEERFIFTPANCPIRLQIEQHLHRELGNRYKKMELTSSMSHEYYVRENIGISIFTSTAHSKPFNGTKVIPILNLDITPPIGLLTNQKEVHFDRATKDLIARITKRFQQRSKELEGTSDKTITG.

Residues 1–57 (MELRSIKTFHTIVKFGSFYKAAEILNYSQPTISMRMKQLEQDLGVLLFERGKSLQLT) form the HTH lysR-type domain. Positions 18 to 37 (FYKAAEILNYSQPTISMRMK) form a DNA-binding region, H-T-H motif.

Belongs to the LysR transcriptional regulatory family.

Functionally, positively regulates the expression of ytmI operon in response to the availability of sulfur sources. The polypeptide is HTH-type transcriptional regulator YtlI (ytlI) (Bacillus subtilis (strain 168)).